A 317-amino-acid chain; its full sequence is MRALVSVVSLFFLGIQAHSDWSYSGDDGVGESQWSEQYPSCGGERQSPIDVKTEEVMFNPSLKPLSLVNYEKENLEFTMTNNGHTVSIDLPPSMYLETSDGTEFISKAFHFHWGGRDWELSGSEHTIDGIRSIMEAHFVHFNKEYGTYENAKDQKNGLAVLAVLFKIDEYAENTYYSDIISALKNIEKPGETTTLKDTTIRNLLPKDVHHYYTYPGSLTTPPCTENVQWFVLRDKVTLSKAQVVTIENSVMDHNNNTIQNGYRSTQPNNHRVVEANFLNVQDMYSSYHLYLKNMQKEILQPKKQKKTKKNRHFWSRK.

The N-terminal stretch at 1–17 is a signal peptide; it reads MRALVSVVSLFFLGIQA. The 259-residue stretch at 19–277 folds into the Alpha-carbonic anhydrase domain; that stretch reads SDWSYSGDDG…NNHRVVEANF (259 aa). Cysteines 41 and 223 form a disulfide. The active-site Proton donor/acceptor is the His84. Zn(2+) contacts are provided by His110, His112, and His137. A substrate-binding site is contributed by 219 to 220; the sequence is TT. The N-linked (GlcNAc...) asparagine glycan is linked to Asn255.

This sequence belongs to the alpha-carbonic anhydrase family. The cofactor is Zn(2+). In terms of tissue distribution, major constituent of saliva.

The protein localises to the secreted. It carries out the reaction hydrogencarbonate + H(+) = CO2 + H2O. In terms of biological role, reversible hydration of carbon dioxide. Its role in saliva is unknown. This chain is Carbonic anhydrase 6 (Ca6), found in Mus musculus (Mouse).